Reading from the N-terminus, the 1517-residue chain is DNA-directed RNA polymerase subunit beta' (1517 aa).

Positions 71, 73, 86, and 89 each coordinate Zn(2+). 3 residues coordinate Mg(2+): Asp-482, Asp-484, and Asp-486. Residues Cys-812, Cys-886, Cys-893, and Cys-896 each contribute to the Zn(2+) site.

This sequence belongs to the RNA polymerase beta' chain family. The RNAP catalytic core consists of 2 alpha, 1 beta, 1 beta' and 1 omega subunit. When a sigma factor is associated with the core the holoenzyme is formed, which can initiate transcription. Mg(2+) is required as a cofactor. Zn(2+) serves as cofactor.

The catalysed reaction is RNA(n) + a ribonucleoside 5'-triphosphate = RNA(n+1) + diphosphate. Functionally, DNA-dependent RNA polymerase catalyzes the transcription of DNA into RNA using the four ribonucleoside triphosphates as substrates. The polypeptide is DNA-directed RNA polymerase subunit beta' (Campylobacter jejuni subsp. jejuni serotype O:2 (strain ATCC 700819 / NCTC 11168)).